A 72-amino-acid polypeptide reads, in one-letter code: Translation initiation factor IF-1 (72 aa).

The S1-like domain maps to 1-72 (MSKDDVIEID…DKGRITYRYK (72 aa)).

It belongs to the IF-1 family. In terms of assembly, component of the 30S ribosomal translation pre-initiation complex which assembles on the 30S ribosome in the order IF-2 and IF-3, IF-1 and N-formylmethionyl-tRNA(fMet); mRNA recruitment can occur at any time during PIC assembly.

It localises to the cytoplasm. Its function is as follows. One of the essential components for the initiation of protein synthesis. Stabilizes the binding of IF-2 and IF-3 on the 30S subunit to which N-formylmethionyl-tRNA(fMet) subsequently binds. Helps modulate mRNA selection, yielding the 30S pre-initiation complex (PIC). Upon addition of the 50S ribosomal subunit IF-1, IF-2 and IF-3 are released leaving the mature 70S translation initiation complex. The protein is Translation initiation factor IF-1 of Campylobacter hominis (strain ATCC BAA-381 / DSM 21671 / CCUG 45161 / LMG 19568 / NCTC 13146 / CH001A).